The primary structure comprises 75 residues: Exodeoxyribonuclease 7 small subunit (75 aa).

The protein belongs to the XseB family. Heterooligomer composed of large and small subunits.

It localises to the cytoplasm. The enzyme catalyses Exonucleolytic cleavage in either 5'- to 3'- or 3'- to 5'-direction to yield nucleoside 5'-phosphates.. Functionally, bidirectionally degrades single-stranded DNA into large acid-insoluble oligonucleotides, which are then degraded further into small acid-soluble oligonucleotides. The sequence is that of Exodeoxyribonuclease 7 small subunit from Chlamydia felis (strain Fe/C-56) (Chlamydophila felis).